We begin with the raw amino-acid sequence, 352 residues long: Phosphoribosylformylglycinamidine cyclo-ligase (352 aa).

This sequence belongs to the AIR synthase family.

Its subcellular location is the cytoplasm. The catalysed reaction is 2-formamido-N(1)-(5-O-phospho-beta-D-ribosyl)acetamidine + ATP = 5-amino-1-(5-phospho-beta-D-ribosyl)imidazole + ADP + phosphate + H(+). Its pathway is purine metabolism; IMP biosynthesis via de novo pathway; 5-amino-1-(5-phospho-D-ribosyl)imidazole from N(2)-formyl-N(1)-(5-phospho-D-ribosyl)glycinamide: step 2/2. In Azoarcus sp. (strain BH72), this protein is Phosphoribosylformylglycinamidine cyclo-ligase.